Consider the following 286-residue polypeptide: Translocon-associated protein subunit alpha (286 aa).

The N-terminal stretch at 1 to 23 is a signal peptide; it reads MRVLPRLLLLLLLAFPAAVLLRG. Topologically, residues 24 to 207 are lumenal; the sequence is GPGGSLVAAQ…EREDGLDGET (184 aa). Over residues 37–75 the composition is skewed to acidic residues; that stretch reads EDEETVEDSIIEDEDDEAEVEEDEPTDLAEDKEEEDVSG. The tract at residues 37–83 is disordered; it reads EDEETVEDSIIEDEDDEAEVEEDEPTDLAEDKEEEDVSGEPEASPSA. 2 N-linked (GlcNAc...) asparagine glycosylation sites follow: asparagine 136 and asparagine 191. The chain crosses the membrane as a helical span at residues 208–228; sequence IFMYMFLAGLGLLVVVGLHQL. Over 229-286 the chain is Cytoplasmic; it reads LESRKRKRPIQKVEMGTSSQNDVDMSWIPQETLNQINKASPRRLPRKRAQKRSVGSDE. A Phosphoserine modification is found at serine 247. Threonine 260 carries the post-translational modification Phosphothreonine. The segment at 261–286 is disordered; it reads LNQINKASPRRLPRKRAQKRSVGSDE. Serine 268 carries the phosphoserine modification. Residues 268–279 are compositionally biased toward basic residues; that stretch reads SPRRLPRKRAQK.

The protein belongs to the TRAP-alpha family. Heterotetramer of TRAP-alpha, TRAP-beta, TRAP-delta and TRAP-gamma. Interacts with palmitoylated calnexin (CALX), the interaction is required for efficient folding of glycosylated proteins. Post-translationally, phosphorylated in its cytoplasmic tail.

It is found in the endoplasmic reticulum membrane. Functionally, TRAP proteins are part of a complex whose function is to bind calcium to the ER membrane and thereby regulate the retention of ER resident proteins. May be involved in the recycling of the translocation apparatus after completion of the translocation process or may function as a membrane-bound chaperone facilitating folding of translocated proteins. The sequence is that of Translocon-associated protein subunit alpha (SSR1) from Canis lupus familiaris (Dog).